A 251-amino-acid polypeptide reads, in one-letter code: Imidazole glycerol phosphate synthase subunit HisF (251 aa).

Residues D11 and D130 contribute to the active site.

It belongs to the HisA/HisF family. In terms of assembly, heterodimer of HisH and HisF.

The protein localises to the cytoplasm. It catalyses the reaction 5-[(5-phospho-1-deoxy-D-ribulos-1-ylimino)methylamino]-1-(5-phospho-beta-D-ribosyl)imidazole-4-carboxamide + L-glutamine = D-erythro-1-(imidazol-4-yl)glycerol 3-phosphate + 5-amino-1-(5-phospho-beta-D-ribosyl)imidazole-4-carboxamide + L-glutamate + H(+). The protein operates within amino-acid biosynthesis; L-histidine biosynthesis; L-histidine from 5-phospho-alpha-D-ribose 1-diphosphate: step 5/9. IGPS catalyzes the conversion of PRFAR and glutamine to IGP, AICAR and glutamate. The HisF subunit catalyzes the cyclization activity that produces IGP and AICAR from PRFAR using the ammonia provided by the HisH subunit. This chain is Imidazole glycerol phosphate synthase subunit HisF, found in Streptococcus mutans serotype c (strain ATCC 700610 / UA159).